A 64-amino-acid polypeptide reads, in one-letter code: Metallothionein-like protein 1 (64 aa).

Belongs to the metallothionein superfamily. Type 15 family.

Functionally, metallothioneins have a high content of cysteine residues that bind various heavy metals. In Prunus avium (Cherry), this protein is Metallothionein-like protein 1 (MT1).